We begin with the raw amino-acid sequence, 130 residues long: Small ribosomal subunit protein uS9 (130 aa).

It belongs to the universal ribosomal protein uS9 family.

The chain is Small ribosomal subunit protein uS9 from Serratia proteamaculans (strain 568).